A 1889-amino-acid chain; its full sequence is Protein TIC 214 (1889 aa).

The next 6 helical transmembrane spans lie at 11 to 31 (LISLYMTIINSVVMVGLYYGF), 67 to 87 (FIAGQLMMFISIYYVPLHLAL), 88 to 108 (GKPHTITVLALPYLLFHFFWN), 127 to 147 (LSIQCVFLNNLIIQLFNHFIL), 175 to 195 (VGWLIGHILLMKWVGLVLVWI), and 224 to 244 (IFSILLFITCVYYLGRIPSPI). Residues 255 to 265 (PEEVGESEEER) are compositionally biased toward acidic residues. Disordered stretches follow at residues 255–303 (PEEV…PSKE) and 1610–1633 (SNQEKDVEEDYDKSDKKKRRKKKQ). The span at 279–293 (NQKQGTEENTSSSLF) shows a compositional bias: polar residues.

Belongs to the TIC214 family. In terms of assembly, part of the Tic complex.

The protein resides in the plastid. Its subcellular location is the chloroplast inner membrane. In terms of biological role, involved in protein precursor import into chloroplasts. May be part of an intermediate translocation complex acting as a protein-conducting channel at the inner envelope. This chain is Protein TIC 214, found in Gossypium barbadense (Sea Island cotton).